A 658-amino-acid chain; its full sequence is L-type lectin-domain containing receptor kinase V.4 (658 aa).

Positions 1 to 25 (MSRTIGSRVIFLILALFCCTENSRG) are cleaved as a signal peptide. Residues 26–248 (KLVMQGSAGF…RAMHYMLSWF (223 aa)) form a legume-lectin like region. The Extracellular segment spans residues 26-280 (KLVMQGSAGF…EKSLVYRIVL (255 aa)). 2 N-linked (GlcNAc...) asparagine glycosylation sites follow: N66 and N196. The helical transmembrane segment at 281 to 301 (VTSLALVLFVALVASALSIFF) threads the bilayer. The Cytoplasmic segment spans residues 302–658 (YRRHKKVKEV…LTEPFTSRGR (357 aa)). A Protein kinase domain is found at 334-592 (KGFKQLLGKG…LGVLCSHQAV (259 aa)). Residues 340–348 (LGKGGFGQV) and K363 each bind ATP. The Proton acceptor role is filled by D460.

It in the C-terminal section; belongs to the protein kinase superfamily. Ser/Thr protein kinase family. This sequence in the N-terminal section; belongs to the leguminous lectin family.

The protein localises to the cell membrane. It carries out the reaction L-seryl-[protein] + ATP = O-phospho-L-seryl-[protein] + ADP + H(+). The catalysed reaction is L-threonyl-[protein] + ATP = O-phospho-L-threonyl-[protein] + ADP + H(+). Its function is as follows. Involved in resistance response to the pathogenic oomycetes Phytophthora infestans and Phytophthora capsici and to the pathogenic bacteria Pseudomonas syringae. In Arabidopsis thaliana (Mouse-ear cress), this protein is L-type lectin-domain containing receptor kinase V.4.